The following is a 251-amino-acid chain: 5'-nucleotidase SurE (251 aa).

Positions 8, 9, 40, and 95 each coordinate a divalent metal cation.

This sequence belongs to the SurE nucleotidase family. A divalent metal cation serves as cofactor.

It localises to the cytoplasm. The catalysed reaction is a ribonucleoside 5'-phosphate + H2O = a ribonucleoside + phosphate. Functionally, nucleotidase that shows phosphatase activity on nucleoside 5'-monophosphates. The polypeptide is 5'-nucleotidase SurE (Desulfitobacterium hafniense (strain DSM 10664 / DCB-2)).